The sequence spans 157 residues: Phospholipase A2 phaiodactylipin (157 aa).

Ca(2+) contacts are provided by W34 and G36. 5 disulfide bridges follow: C35-C56, C55-C94, C62-C87, C85-C127, and C132-C143. N43 carries N-linked (GlcNAc...) asparagine glycosylation. H59 is an active-site residue. Position 60 (D60) interacts with Ca(2+). D88 is an active-site residue. N101 is a glycosylation site (N-linked (GlcNAc...) asparagine). Residues 134–139 (DEKSAR) constitute a propeptide, removed in mature form. N-linked (GlcNAc...) asparagine glycosylation is present at N153.

Belongs to the phospholipase A2 family. Group III subfamily. In terms of assembly, heterodimer composed of a small subunit and a large subunit; disulfide-linked. The cofactor is Ca(2+). In terms of tissue distribution, expressed by the venom gland.

Its subcellular location is the secreted. It catalyses the reaction a 1,2-diacyl-sn-glycero-3-phosphocholine + H2O = a 1-acyl-sn-glycero-3-phosphocholine + a fatty acid + H(+). In terms of biological role, scorpion venom phospholipase A2 (PLA2) that is lethal to crickets and crustaceae. Causes inflammation in mice and lysis of human erythrocytes. Has a mild anticoagulant effect on human platelets. PLA2 catalyzes the calcium-dependent hydrolysis of the 2-acyl groups in 3-sn-phosphoglycerides. The sequence is that of Phospholipase A2 phaiodactylipin from Anuroctonus phaiodactylus (Mafia scorpion).